The primary structure comprises 260 residues: Granzyme A (260 aa).

The N-terminal stretch at 1–26 (MRNASGPRGPSLATLLFLLLIPEGGC) is a signal peptide. The propeptide at 27–28 (ER) is activation peptide. One can recognise a Peptidase S1 domain in the interval 29–257 (IIGGDTVVPH…HLNWIKKIMK (229 aa)). The cysteines at positions 54 and 70 are disulfide-linked. Catalysis depends on charge relay system residues H69 and D113. 3 disulfide bridges follow: C147–C217, C178–C196, and C207–C232. 2 N-linked (GlcNAc...) asparagine glycosylation sites follow: N157 and N169. The active-site Charge relay system is the S211.

Belongs to the peptidase S1 family. Granzyme subfamily. As to quaternary structure, homodimer; disulfide-linked. Interacts with APEX1. As to expression, found in cytotoxic lymphocytes and in normal lymphoid tissues such as thymus and spleen. More abundant in lymphoid tissues than isoform HF2.

It localises to the secreted. It is found in the cytoplasmic granule. The enzyme catalyses Hydrolysis of proteins, including fibronectin, type IV collagen and nucleolin. Preferential cleavage: -Arg-|-Xaa-, -Lys-|-Xaa- &gt;&gt; -Phe-|-Xaa- in small molecule substrates.. Abundant protease in the cytosolic granules of cytotoxic T-cells and NK-cells which activates caspase-independent pyroptosis when delivered into the target cell through the immunological synapse. It cleaves after Lys or Arg. Cleaves APEX1 after 'Lys-31' and destroys its oxidative repair activity. Cleaves the nucleosome assembly protein SET after 'Lys-189', which disrupts its nucleosome assembly activity and allows the SET complex to translocate into the nucleus to nick and degrade the DNA. The chain is Granzyme A (Gzma) from Mus musculus (Mouse).